We begin with the raw amino-acid sequence, 90 residues long: Small ribosomal subunit protein uS15 (90 aa).

This sequence belongs to the universal ribosomal protein uS15 family. As to quaternary structure, part of the 30S ribosomal subunit. Forms a bridge to the 50S subunit in the 70S ribosome, contacting the 23S rRNA.

Functionally, one of the primary rRNA binding proteins, it binds directly to 16S rRNA where it helps nucleate assembly of the platform of the 30S subunit by binding and bridging several RNA helices of the 16S rRNA. Forms an intersubunit bridge (bridge B4) with the 23S rRNA of the 50S subunit in the ribosome. The chain is Small ribosomal subunit protein uS15 from Helicobacter pylori (strain HPAG1).